A 1939-amino-acid polypeptide reads, in one-letter code: Myosin-8 (1939 aa).

Positions 35–84 (DAKTSVFVAEPKASYVKSTIQSKEGGKVTVKTEGGATLTVREDQVFPMNP) constitute a Myosin N-terminal SH3-like domain. Residues threonine 66 and threonine 71 each carry the phosphothreonine modification. Residues 88–783 (DKIEDMAMMT…LLGLLEEMRD (696 aa)) enclose the Myosin motor domain. An N6,N6,N6-trimethyllysine modification is found at lysine 132. 181-188 (GESGAGKT) contacts ATP. Tyrosine 391 bears the Phosphotyrosine mark. Threonine 421 carries the post-translational modification Phosphothreonine. Tyrosine 426 bears the Phosphotyrosine mark. The residue at position 627 (serine 627) is a Phosphoserine. Residues 660-682 (LNKLMTNLRSTHPHFVRCIIPNE) are actin-binding. Position 758 is a pros-methylhistidine (histidine 758). Residues 762 to 776 (KFGHTKVFFKAGLLG) are actin-binding. An IQ domain is found at 783–815 (DEKLSQIITRTQAVCRGFLMRVEYQKMLQRREA). Positions 844 to 1939 (LLKSAETEKE…REVHTKISAE (1096 aa)) form a coiled coil. Phosphoserine is present on residues serine 1093, serine 1097, serine 1163, and serine 1238. Threonine 1242 carries the post-translational modification Phosphothreonine. A Phosphoserine modification is found at serine 1244. Threonine 1256 is subject to Phosphothreonine. The residue at position 1262 (serine 1262) is a Phosphoserine. Threonine 1266 and threonine 1287 each carry phosphothreonine. 3 positions are modified to phosphoserine: serine 1293, serine 1304, and serine 1307. Tyrosine 1465 carries the phosphotyrosine modification. Threonine 1468 bears the Phosphothreonine mark. Serine 1475 is modified (phosphoserine). The residue at position 1493 (tyrosine 1493) is a Phosphotyrosine. At serine 1496 the chain carries Phosphoserine. A Phosphothreonine modification is found at threonine 1502. At serine 1515 the chain carries Phosphoserine. A Phosphothreonine modification is found at threonine 1518. 6 positions are modified to phosphoserine: serine 1555, serine 1575, serine 1601, serine 1604, serine 1715, and serine 1727. At threonine 1731 the chain carries Phosphothreonine. Serine 1740 is modified (phosphoserine).

The protein belongs to the TRAFAC class myosin-kinesin ATPase superfamily. Myosin family. As to quaternary structure, muscle myosin is a hexameric protein that consists of 2 heavy chain subunits (MHC), 2 alkali light chain subunits (MLC) and 2 regulatory light chain subunits (MLC-2).

Its subcellular location is the cytoplasm. It is found in the myofibril. Functionally, muscle contraction. This Canis lupus familiaris (Dog) protein is Myosin-8 (MYH8).